Reading from the N-terminus, the 420-residue chain is UDP-glucuronic acid decarboxylase 1 (420 aa).

Methionine 1 carries the N-acetylmethionine modification. At 1 to 19 the chain is on the cytoplasmic side; the sequence is MVSKALLRLVSAVNRRRMK. The chain crosses the membrane as a helical; Signal-anchor for type II membrane protein span at residues 20–40; it reads LLLGIALLAYVASVWGNFVNM. Residues 41–420 are Lumenal-facing; it reads RSIQENGELK…RIKKGRTRHS (380 aa). Threonine 94 is modified (phosphothreonine). 10 residues coordinate NAD(+): glycine 98, phenylalanine 99, valine 100, aspartate 119, asparagine 120, phenylalanine 122, threonine 123, glycine 124, aspartate 144, and valine 145. UDP-alpha-D-glucuronate is bound by residues leucine 149 and tyrosine 150. NAD(+) contacts are provided by leucine 159 and serine 161. Lysine 177 contacts UDP-alpha-D-glucuronate. Position 178 (threonine 178) interacts with NAD(+). Residues asparagine 185, glycine 188, lysine 191, and arginine 192 each contribute to the UDP-alpha-D-glucuronate site. Positions 200, 231, and 235 each coordinate NAD(+). Tyrosine 231 functions as the Proton acceptor in the catalytic mechanism. Tyrosine 245, glutamine 248, and glutamate 249 together coordinate UDP-alpha-D-glucuronate. Positions 261, 267, and 272 each coordinate NAD(+). A glycan (N-linked (GlcNAc...) asparagine) is linked at asparagine 316.

It belongs to the NAD(P)-dependent epimerase/dehydratase family. UDP-glucuronic acid decarboxylase subfamily. As to quaternary structure, homodimer and homotetramer. Interacts with AKT1. NAD(+) is required as a cofactor.

The protein localises to the golgi apparatus. It is found in the golgi stack membrane. The catalysed reaction is UDP-alpha-D-glucuronate + H(+) = UDP-alpha-D-xylose + CO2. It participates in nucleotide-sugar biosynthesis; UDP-alpha-D-xylose biosynthesis; UDP-alpha-D-xylose from UDP-alpha-D-glucuronate: step 1/1. Functionally, catalyzes the NAD-dependent decarboxylation of UDP-glucuronic acid to UDP-xylose. Necessary for the biosynthesis of the core tetrasaccharide in glycosaminoglycan biosynthesis. The polypeptide is UDP-glucuronic acid decarboxylase 1 (Homo sapiens (Human)).